The following is a 380-amino-acid chain: E3 ubiquitin-protein ligase RNF13 (380 aa).

The signal sequence occupies residues 1–34 (MLLSIGMLMLSATQVYTILTVQLFAFLNLLPVEA). Residues 35–182 (DILAYNFENA…VPEFSLPLEY (148 aa)) lie on the Lumenal side of the membrane. The PA domain occupies 65-160 (KGFLINSKPE…GESSANSLKD (96 aa)). Asn88 carries an N-linked (GlcNAc...) asparagine glycan. A helical membrane pass occupies residues 183–203 (YLIPFLIIVGICLILIVIFMI). Residues 204–380 (TKFVQDRHRA…ERDYNIANTV (177 aa)) are Cytoplasmic-facing. Residues 240-282 (CAICLDEYEDGDKLRILPCSHAYHCKCVDPWLTKTKKTCPVCK) form an RING-type; atypical zinc finger. Positions 285 to 380 (VVPSQGDSDS…ERDYNIANTV (96 aa)) are disordered. 2 stretches are compositionally biased toward acidic residues: residues 292 to 304 (SDSDTDSSQEENE) and 339 to 356 (SDYEEDDNDTDSSDAENE).

Interacts with ERN1. Autoubiquitinated.

It is found in the endoplasmic reticulum membrane. Its subcellular location is the late endosome membrane. It localises to the lysosome membrane. The protein resides in the nucleus inner membrane. It catalyses the reaction S-ubiquitinyl-[E2 ubiquitin-conjugating enzyme]-L-cysteine + [acceptor protein]-L-lysine = [E2 ubiquitin-conjugating enzyme]-L-cysteine + N(6)-ubiquitinyl-[acceptor protein]-L-lysine.. The protein operates within protein modification; protein ubiquitination. In terms of biological role, E3 ubiquitin-protein ligase that regulates cell proliferation. Involved in apoptosis regulation. Mediates ER stress-induced activation of JNK signaling pathway and apoptosis by promoting ERN1 activation and splicing of XBP1 mRNA. Also involved in protein trafficking and localization. The sequence is that of E3 ubiquitin-protein ligase RNF13 (RNF13) from Bos taurus (Bovine).